A 177-amino-acid chain; its full sequence is Large ribosomal subunit protein uL6 (177 aa).

This sequence belongs to the universal ribosomal protein uL6 family. As to quaternary structure, part of the 50S ribosomal subunit.

In terms of biological role, this protein binds to the 23S rRNA, and is important in its secondary structure. It is located near the subunit interface in the base of the L7/L12 stalk, and near the tRNA binding site of the peptidyltransferase center. The polypeptide is Large ribosomal subunit protein uL6 (Bradyrhizobium sp. (strain BTAi1 / ATCC BAA-1182)).